A 249-amino-acid chain; its full sequence is Proteasome activator complex subunit 1 (249 aa).

A disordered region spans residues 60–101 (PLDIPVPDPVKEKEKGERKKQQEKEDKDEKKKGEDEDKGPPC). The span at 68–98 (PVKEKEKGERKKQQEKEDKDEKKKGEDEDKG) shows a compositional bias: basic and acidic residues.

This sequence belongs to the PA28 family. In terms of assembly, heterodimer of PSME1 and PSME2, which forms a hexameric ring. PSME1 can form homoheptamers.

Its function is as follows. Implicated in immunoproteasome assembly and required for efficient antigen processing. The PA28 activator complex enhances the generation of class I binding peptides by altering the cleavage pattern of the proteasome. The sequence is that of Proteasome activator complex subunit 1 (PSME1) from Macaca fascicularis (Crab-eating macaque).